The following is a 64-amino-acid chain: UPF0434 protein BOV_A0835 (64 aa).

It belongs to the UPF0434 family.

The polypeptide is UPF0434 protein BOV_A0835 (Brucella ovis (strain ATCC 25840 / 63/290 / NCTC 10512)).